The chain runs to 46 residues: KSCCRNTLARNCYNACRFTGGSQPTCGILCDCIHVTTTTCPSSHPS.

Disulfide bonds link Cys3-Cys40, Cys4-Cys32, Cys12-Cys30, and Cys16-Cys26.

The protein belongs to the plant thionin (TC 1.C.44) family. 4 C-C subfamily.

The protein localises to the secreted. Thionins are small plant proteins which are toxic to animal cells. They seem to exert their toxic effect at the level of the cell membrane. Their precise function is not known. The protein is Hellethionin-D of Helleborus purpurascens (Purple hellebore).